The following is a 701-amino-acid chain: Elongation factor G (701 aa).

Residues 8–290 (KHYRNIGISA…AVIEYLPAPI (283 aa)) enclose the tr-type G domain. Residues 17–24 (AHIDAGKT), 88–92 (DTPGH), and 142–145 (NKMD) contribute to the GTP site.

This sequence belongs to the TRAFAC class translation factor GTPase superfamily. Classic translation factor GTPase family. EF-G/EF-2 subfamily.

Its subcellular location is the cytoplasm. In terms of biological role, catalyzes the GTP-dependent ribosomal translocation step during translation elongation. During this step, the ribosome changes from the pre-translocational (PRE) to the post-translocational (POST) state as the newly formed A-site-bound peptidyl-tRNA and P-site-bound deacylated tRNA move to the P and E sites, respectively. Catalyzes the coordinated movement of the two tRNA molecules, the mRNA and conformational changes in the ribosome. This chain is Elongation factor G, found in Hamiltonella defensa subsp. Acyrthosiphon pisum (strain 5AT).